Consider the following 194-residue polypeptide: Outer-membrane lipoprotein LolB (194 aa).

The first 18 residues, 1-18 (MKLLQHLTLIFCLLILTA), serve as a signal peptide directing secretion. Cys19 carries N-palmitoyl cysteine lipidation. The S-diacylglycerol cysteine moiety is linked to residue Cys19.

Belongs to the LolB family. In terms of assembly, monomer.

The protein resides in the cell outer membrane. Plays a critical role in the incorporation of lipoproteins in the outer membrane after they are released by the LolA protein. This Tolumonas auensis (strain DSM 9187 / NBRC 110442 / TA 4) protein is Outer-membrane lipoprotein LolB.